The following is a 251-amino-acid chain: Hydroxyacylglutathione hydrolase (251 aa).

Residues His-53, His-55, Asp-57, His-58, His-110, Asp-127, and His-165 each contribute to the Zn(2+) site.

Belongs to the metallo-beta-lactamase superfamily. Glyoxalase II family. As to quaternary structure, monomer. Zn(2+) is required as a cofactor.

The catalysed reaction is an S-(2-hydroxyacyl)glutathione + H2O = a 2-hydroxy carboxylate + glutathione + H(+). Its pathway is secondary metabolite metabolism; methylglyoxal degradation; (R)-lactate from methylglyoxal: step 2/2. Its function is as follows. Thiolesterase that catalyzes the hydrolysis of S-D-lactoyl-glutathione to form glutathione and D-lactic acid. This Yersinia enterocolitica serotype O:8 / biotype 1B (strain NCTC 13174 / 8081) protein is Hydroxyacylglutathione hydrolase.